Here is a 585-residue protein sequence, read N- to C-terminus: Protein cereblon (585 aa).

2 disordered regions span residues 1 to 109 (MDEE…DLES) and 156 to 195 (FSQE…IGFD). Polar residues predominate over residues 80–95 (QDDTASEGSHPSSDMS). The span at 158–167 (QERRRSRTSE) shows a compositional bias: basic and acidic residues. The span at 178–189 (VDPPPQQPPRPP) shows a compositional bias: pro residues. In terms of domain architecture, Lon N-terminal spans 225-451 (HMLIFLHQHI…LIKSTFKDET (227 aa)). One can recognise a CULT domain in the interval 450–559 (ETLFFCRYCN…LAGSSVRIGK (110 aa)). The Zn(2+) site is built by Cys455, Cys458, Cys524, and Cys527.

The protein belongs to the CRBN family. In terms of assembly, likely a component of a DCX (DDB1-CUL4-X-box) protein ligase complex. May interact with pic/DDB1. Ubiquitinated. Expressed in the fat body (at protein level).

The protein localises to the nucleus. It functions in the pathway protein modification; protein ubiquitination. Functionally, substrate recognition component of a DCX (DDB1-CUL4-X-box) E3 protein ligase complex that mediates the ubiquitination and subsequent proteasomal degradation of target proteins. Has an essential role in mediating growth by negatively regulating insulin signaling. It also has a role in maintaining presynaptic function in the neuromuscular junction synapses of third-instar larvae. This is Protein cereblon from Drosophila melanogaster (Fruit fly).